A 477-amino-acid chain; its full sequence is Succinate-semialdehyde dehydrogenase [NADP(+)] (477 aa).

NADP(+)-binding positions include 142–143 (WN), 166–169 (KHSE), and 218–219 (GS). The active-site Proton acceptor is the E240. L241 is an NADP(+) binding site. C274 functions as the Nucleophile in the catalytic mechanism. Residue E371 participates in NADP(+) binding.

Belongs to the aldehyde dehydrogenase family.

The enzyme catalyses succinate semialdehyde + NADP(+) + H2O = succinate + NADPH + 2 H(+). Its pathway is amino-acid degradation; 4-aminobutanoate degradation. Catalyzes the NADP(+) dependent oxidation of succinate semialdehyde to succinate. The protein is Succinate-semialdehyde dehydrogenase [NADP(+)] (ssdA) of Deinococcus radiodurans (strain ATCC 13939 / DSM 20539 / JCM 16871 / CCUG 27074 / LMG 4051 / NBRC 15346 / NCIMB 9279 / VKM B-1422 / R1).